The primary structure comprises 642 residues: Chaperone protein DnaK (642 aa).

The residue at position 200 (T200) is a Phosphothreonine; by autocatalysis. A compositionally biased stretch (low complexity) spans 603–623; the sequence is AAAAEQGGNADAASGNAQASK. The tract at residues 603–627 is disordered; it reads AAAAEQGGNADAASGNAQASKAADD.

It belongs to the heat shock protein 70 family.

In terms of biological role, acts as a chaperone. The polypeptide is Chaperone protein DnaK (Xanthomonas campestris pv. campestris (strain B100)).